Here is a 134-residue protein sequence, read N- to C-terminus: DNA-directed RNA polymerase subunit omega (134 aa).

The protein belongs to the RNA polymerase subunit omega family. As to quaternary structure, the RNAP catalytic core consists of 2 alpha, 1 beta, 1 beta' and 1 omega subunit. When a sigma factor is associated with the core the holoenzyme is formed, which can initiate transcription.

It catalyses the reaction RNA(n) + a ribonucleoside 5'-triphosphate = RNA(n+1) + diphosphate. Functionally, promotes RNA polymerase assembly. Latches the N- and C-terminal regions of the beta' subunit thereby facilitating its interaction with the beta and alpha subunits. This Brucella anthropi (strain ATCC 49188 / DSM 6882 / CCUG 24695 / JCM 21032 / LMG 3331 / NBRC 15819 / NCTC 12168 / Alc 37) (Ochrobactrum anthropi) protein is DNA-directed RNA polymerase subunit omega.